We begin with the raw amino-acid sequence, 324 residues long: NAC domain-containing protein 30 (324 aa).

Positions 9–158 constitute an NAC domain; sequence MPPGFRFHPT…GWVVCRAFRK (150 aa). The DNA-binding element occupies 109–164; that stretch reads IGMRKTLVYYKGRAPNGRKSDWIMHEYRLQNSELAPVQEEGWVVCRAFRKPIPNQR. Over residues 232 to 244 the composition is skewed to low complexity; sequence LPQLDSPSLSPSL. The interval 232 to 259 is disordered; that stretch reads LPQLDSPSLSPSLGTNKDQNESFEQEEE.

Belongs to the plant vascular related NAC-domain protein family. Forms homodimer and heterodimers with other VND proteins (e.g. NAC037/VND1, NAC076/VND2 and NAC105/VND3) via their N-termini. Interacts with NAC083/VNI2. In terms of tissue distribution, expressed in developing protoxylems in roots and shoots. Detected in root protoxylem poles and in vessels of protoxylems, outermost metaxylems, inner metaxylems, shoots and hypocotyls. Expressed in roots, hypocotyls, cotyledons and leaves. Accumulates in the xylem but not in interfascicular fibers or pith cells in inflorescence stems. Present in developing vessels of the secondary xylem in roots undergoing secondary growth.

Its subcellular location is the nucleus. In terms of biological role, transcription activator that binds to the secondary wall NAC binding element (SNBE), 5'-(T/A)NN(C/T)(T/C/G)TNNNNNNNA(A/C)GN(A/C/T)(A/T)-3', in the promoter of target genes (e.g. genes involved in secondary wall biosynthesis, cell wall modification such as xylan accumulation, and programmed cell death). Involved in xylem formation in roots and shoots, especially regulating protoxylem vessel differentiation by promoting immature xylem vessel-specific genes expression. Can activate the expression of several genes including XCP1, MYB46, NAC010/SND3, MYB103, MYB58, MYB63, MYB83, KNAT7, ASL19 and ASL20. Its function is as follows. Required for the soilborne fungal pathogen Verticillium longisporum-induced transdifferentiation of chloroplast-containing bundle sheath cells to functional xylem elements leading to stunted growth, vein clearing, and leaf chloroses, as well as xylem hyperplasia within the vasculature of leaves, hypocotyls, and roots due to reinitiation of cambial activity and transdifferentiation of xylem parenchyma cells. This developmental reprogramming also mediates an increased drought stress tolerance. In Arabidopsis thaliana (Mouse-ear cress), this protein is NAC domain-containing protein 30.